The following is a 590-amino-acid chain: Cationic amino acid transporter 8, vacuolar (590 aa).

Over 1 to 85 (MIPASMEEAH…ESENPMRRCL (85 aa)) the chain is Cytoplasmic. The chain crosses the membrane as a helical span at residues 86–106 (TWWDLLWLSFGSVVGSGVFVI). At 107-114 (TGQEARVG) the chain is on the vacuolar side. The helical transmembrane segment at 115-135 (AGPAVVLSYAISGVSALLSVL) threads the bilayer. Residues 136 to 160 (CYAEFGVEIPVAGGSFSYLRVELGD) lie on the Cytoplasmic side of the membrane. A helical membrane pass occupies residues 161–181 (FIAFIAAGNILLEAMVGAAGL). The Vacuolar segment spans residues 182-209 (GRSWSSYLASLVKNDSDYFRIKVDSFAK). N195 carries N-linked (GlcNAc...) asparagine glycosylation. Residues 210 to 230 (GFDLLDPVAVAVLLVANGIAM) traverse the membrane as a helical segment. At 231-238 (TGTKRTSW) the chain is on the cytoplasmic side. The helical transmembrane segment at 239 to 259 (LNLITSMVTVCIIVFIVVVGF) threads the bilayer. Residues 260–266 (THSKTSN) are Vacuolar-facing. Residues 267 to 287 (LVPFFPYGAKGVVQSAAVVYW) traverse the membrane as a helical segment. Topologically, residues 288–310 (SYTGFDMVANMAEETEKPSRDIP) are cytoplasmic. Residues 311 to 331 (IGLVGSMSMITVVYCLMALAL) traverse the membrane as a helical segment. The Vacuolar segment spans residues 332–359 (TMMVKYTEIDANAAYSVAFAQIGMKWAK). Residues 360-380 (YLVGICALKGMTTSLLVGSLG) form a helical membrane-spanning segment. The Cytoplasmic portion of the chain corresponds to 381-407 (QARYTTQIARSHMIPPWFALVHPKTGT). A helical transmembrane segment spans residues 408–428 (PIYATLLVTILSSIISFFTSL). A topological domain (vacuolar) is located at residue E429. Residues 430 to 450 (VLSSVFSFATLFIFMLVAVAL) form a helical membrane-spanning segment. The Cytoplasmic segment spans residues 451 to 465 (LVRRYYVKDVTPEAG). A helical transmembrane segment spans residues 466–486 (LLKFLGFLFLIIASSIGVSAL). Topologically, residues 487–493 (WNSGVKG) are vacuolar. Residues 494-514 (WIAYTVTGVIWFIGTLGLALL) form a helical membrane-spanning segment. The Cytoplasmic portion of the chain corresponds to 515 to 522 (PKYRVPKV). The chain crosses the membrane as a helical span at residues 523 to 543 (WGVPLVPWLPSFSIAMNLFLI). At 544–553 (GSLGYVAFLR) the chain is on the vacuolar side. Residues 554–574 (FIICTMVMLLYYLFVGLHATY) traverse the membrane as a helical segment. At 575–590 (DVAHQPLEEAKFEGER) the chain is on the cytoplasmic side.

Belongs to the amino acid-polyamine-organocation (APC) superfamily. Cationic amino acid transporter (CAT) (TC 2.A.3.3) family. In terms of tissue distribution, expressed in roots, stems, flowers and leaves. Mostly present in young and rapidly dividing tissues such as the shoot and root apical meristem, and in young leaves and petioles during seedling development.

The protein localises to the cell membrane. Its function is as follows. Permease involved in the transport of the cationic neutral or acidic amino acids. The polypeptide is Cationic amino acid transporter 8, vacuolar (CAT8) (Arabidopsis thaliana (Mouse-ear cress)).